The primary structure comprises 214 residues: Large ribosomal subunit protein uL3 (214 aa).

The interval Gly-119 to Met-159 is disordered.

Belongs to the universal ribosomal protein uL3 family. Part of the 50S ribosomal subunit. Forms a cluster with proteins L14 and L19.

One of the primary rRNA binding proteins, it binds directly near the 3'-end of the 23S rRNA, where it nucleates assembly of the 50S subunit. This Thermomicrobium roseum (strain ATCC 27502 / DSM 5159 / P-2) protein is Large ribosomal subunit protein uL3.